The primary structure comprises 740 residues: Probable apyrase 7 (740 aa).

At 1–113 the chain is on the cytoplasmic side; the sequence is MVFGRITELF…PSTRRKLIRA (113 aa). A helical transmembrane segment spans residues 114 to 134; that stretch reads VMIVMCLFLFAFLVYIVSMYI. Topologically, residues 135 to 581 are extracellular; sequence YTNWSRGASR…LKSYETLSMK (447 aa). Residue asparagine 137 is glycosylated (N-linked (GlcNAc...) asparagine). 147-157 contributes to the ATP binding site; that stretch reads VVFDCGSTGTR. A glycan (N-linked (GlcNAc...) asparagine) is linked at asparagine 208. Glutamate 284 serves as the catalytic Proton acceptor. 309–319 lines the ATP pocket; it reads GALDLGGSSLQ. Asparagine 330, asparagine 374, asparagine 439, and asparagine 484 each carry an N-linked (GlcNAc...) asparagine glycan. The chain crosses the membrane as a helical span at residues 582–602; the sequence is INPIALISILILSLLLLLCAL. Residues 603–740 lie on the Cytoplasmic side of the membrane; the sequence is SRVSNCLPRF…SLADSHMLKM (138 aa). A disordered region spans residues 706–740; sequence FWSSPRRSQMRLQSRRSQSREDLSSSLADSHMLKM. Residues 708–721 show a composition bias toward low complexity; sequence SSPRRSQMRLQSRR.

This sequence belongs to the GDA1/CD39 NTPase family. It depends on Ca(2+) as a cofactor. In terms of tissue distribution, detected in mature pollen grains. Also expressed in more diverse tissues such as roots, leaves, stems, pistils and sepals. More particularly expressed in the vascular bundle.

The protein resides in the membrane. The catalysed reaction is a ribonucleoside 5'-triphosphate + 2 H2O = a ribonucleoside 5'-phosphate + 2 phosphate + 2 H(+). Its function is as follows. Catalyzes the hydrolysis of phosphoanhydride bonds of nucleoside tri- and di-phosphates. Involved in the regulation of pollen and anther development. The sequence is that of Probable apyrase 7 (APY7) from Arabidopsis thaliana (Mouse-ear cress).